The primary structure comprises 270 residues: Phospholysine phosphohistidine inorganic pyrophosphate phosphatase (270 aa).

Mg(2+) is bound by residues D14 and S16. Substrate-binding positions include 14-16 (DVS), 52-53 (TN), and K187. A Mg(2+)-binding site is contributed by D212.

This sequence belongs to the HAD-like hydrolase superfamily. Mg(2+) serves as cofactor.

The protein resides in the cytoplasm. The protein localises to the nucleus. The enzyme catalyses diphosphate + H2O = 2 phosphate + H(+). Phosphatase that hydrolyzes imidodiphosphate, 3-phosphohistidine and 6-phospholysine. Has broad substrate specificity and can also hydrolyze inorganic diphosphate, but with lower efficiency. This chain is Phospholysine phosphohistidine inorganic pyrophosphate phosphatase (lhpp), found in Xenopus laevis (African clawed frog).